The primary structure comprises 146 residues: Hemoglobin subunit beta (146 aa).

Residues 2–146 (HWSAEEKQLI…VAHALARKYH (145 aa)) form the Globin domain. Heme b is bound by residues His63 and His92.

This sequence belongs to the globin family. Heterotetramer of two alpha chains and two beta chains. Red blood cells.

Functionally, involved in oxygen transport from the lung to the various peripheral tissues. This chain is Hemoglobin subunit beta (HBB), found in Anser indicus (Bar-headed goose).